Consider the following 744-residue polypeptide: 6-phosphofructo-2-kinase/fructose-2,6-bisphosphatase (744 aa).

Disordered regions lie at residues 1 to 23 (MGSG…GGQL) and 213 to 245 (RSLS…DGSP). The N-myristoyl glycine moiety is linked to residue G2. The CBM20 domain maps to 17-122 (NGGGGQLYVS…GDARLALFRL (106 aa)). Polar residues predominate over residues 213–232 (RSLSASGSFRNDSTPKAAQR). S220 carries the phosphoserine; by CPK3 modification. 2 positions are modified to phosphoserine: S276 and S295. A 6-phosphofructo-2-kinase region spans residues 301–549 (SLSASSFLID…VFFLVNTHLT (249 aa)). A Phosphoserine; by CPK3 modification is found at S303. ATP is bound at residue 349 to 357 (GLPARGKTF). Residues R382 and R406 each coordinate beta-D-fructose 6-phosphate. D431 is a catalytic residue. 2 residues coordinate beta-D-fructose 6-phosphate: T433 and R439. The active site involves C460. 469–474 (NIRLKI) contributes to the ATP binding site. Beta-D-fructose 6-phosphate contacts are provided by R496 and Y500. The segment at 550–744 (PRPILLTRHG…VQEKRYKLMD (195 aa)) is fructose-2,6-bisphosphatase. R557 is a beta-D-fructose 2,6-bisphosphate binding site. H558 serves as the catalytic Tele-phosphohistidine intermediate. The beta-D-fructose 2,6-bisphosphate site is built by N564 and G570. E630 (proton donor/acceptor) is an active-site residue. Y641, R655, K659, Y670, Q697, and R701 together coordinate beta-D-fructose 2,6-bisphosphate. An ATP-binding site is contributed by 652–655 (YESR). 697–701 (QAVLR) is a binding site for ATP.

This sequence in the C-terminal section; belongs to the phosphoglycerate mutase family. As to quaternary structure, interacts with 14-3-3 proteins; these interactions may regulate both nitrate assimilation and sucrose/starch partitioning in leaves during the diurnal cycle. In terms of processing, phosphorylation at Ser-220 and Ser-303 by CPK3 promotes 14-3-3 proteins binding.

It is found in the membrane. Its subcellular location is the cytoplasm. The enzyme catalyses beta-D-fructose 2,6-bisphosphate + H2O = beta-D-fructose 6-phosphate + phosphate. It carries out the reaction beta-D-fructose 6-phosphate + ATP = beta-D-fructose 2,6-bisphosphate + ADP + H(+). 6-phosphofructo-2-kinase activity is activated by pyruvate. 6-phosphofructo-2-kinase activity is inhibited by PPi, phosphoenolpyruvate and 2-phosphoglycerate. Fructose-2,6-bisphosphatase activity is inhibited by pyruvate, fructose 1,6-bisphosphate and 6-phosphogluconate. In terms of biological role, synthesis and degradation of fructose 2,6-bisphosphate. Regulates carbon partitioning between sucrose versus starch during the diurnal cycle. The sequence is that of 6-phosphofructo-2-kinase/fructose-2,6-bisphosphatase (FKFBP) from Arabidopsis thaliana (Mouse-ear cress).